The primary structure comprises 694 residues: Glycine--tRNA ligase beta subunit (694 aa).

This sequence belongs to the class-II aminoacyl-tRNA synthetase family. As to quaternary structure, tetramer of two alpha and two beta subunits.

The protein localises to the cytoplasm. It carries out the reaction tRNA(Gly) + glycine + ATP = glycyl-tRNA(Gly) + AMP + diphosphate. This is Glycine--tRNA ligase beta subunit from Shewanella denitrificans (strain OS217 / ATCC BAA-1090 / DSM 15013).